The primary structure comprises 215 residues: Thymidylate kinase (215 aa).

12–19 (GIDGAGKS) is an ATP binding site.

This sequence belongs to the thymidylate kinase family.

The catalysed reaction is dTMP + ATP = dTDP + ADP. In terms of biological role, phosphorylation of dTMP to form dTDP in both de novo and salvage pathways of dTTP synthesis. This is Thymidylate kinase from Albidiferax ferrireducens (strain ATCC BAA-621 / DSM 15236 / T118) (Rhodoferax ferrireducens).